The following is a 229-amino-acid chain: MAKHSKKYREAAERIDRNNLYTPEEAIALLKSMPAYNFDQTVEAVLRLNVDPRKADQLVRGSVNLPNGTGKTAKVLVFARGPKATEALEAGADIVGDDDLVEKVANGFLDFDSVVATPDMMGKVGRLGRVLGPRGLMPNPKTGTVTMDVTKAIKDIKGGKVDFRVDKNGNLSFLFGKLSFSAEALDQNFRAVADEVKRLKPATVKGRYITKATISSTMNPGIPVDPASI.

Belongs to the universal ribosomal protein uL1 family. Part of the 50S ribosomal subunit.

Its function is as follows. Binds directly to 23S rRNA. The L1 stalk is quite mobile in the ribosome, and is involved in E site tRNA release. Protein L1 is also a translational repressor protein, it controls the translation of the L11 operon by binding to its mRNA. This Bifidobacterium animalis subsp. lactis (strain AD011) protein is Large ribosomal subunit protein uL1.